Here is a 459-residue protein sequence, read N- to C-terminus: Vanillin aminotransferase (459 aa).

Residues 115 to 116 (GS) and aspartate 255 contribute to the pyridoxal 5'-phosphate site. Position 284 is an N6-(pyridoxal phosphate)lysine (lysine 284). 320–321 (FT) contacts pyridoxal 5'-phosphate. Positions 428 to 459 (LSLEELDELIRIYGKALKDTEKRVEELKSQKK) form a coiled coil.

It belongs to the class-III pyridoxal-phosphate-dependent aminotransferase family. As to expression, expressed in placental tissue of immature fruit.

The catalysed reaction is vanillin + L-alanine = vanillylamine + pyruvate. It participates in aromatic compound metabolism; phenylpropanoid biosynthesis. Involved in the biosynthesis of capsaicinoids natural products, pungent alkaloids synthesized from phenylpropanoid intermediates in the placental tissue of chili pepper fruit acting as repellant on herbivorous mammals and conferring spiciness to hot peppers. Can transfer an amine from vanillylamine to pyruvate forming vanillin and L-alanine. Can use pyruvate or oxaloacetate, but not 2-oxoglutarate as amino group acceptors. Is able to convert (S)-1-phenylethylamine into acetophenone in vitro. The protein is Vanillin aminotransferase of Capsicum chinense (Scotch bonnet).